A 141-amino-acid chain; its full sequence is Nucleoside diphosphate kinase (141 aa).

The ATP site is built by Lys-10, Phe-58, Arg-86, Thr-92, Arg-103, and Asn-113. His-116 acts as the Pros-phosphohistidine intermediate in catalysis.

The protein belongs to the NDK family. As to quaternary structure, homotetramer. Mg(2+) serves as cofactor.

The protein resides in the cytoplasm. It catalyses the reaction a 2'-deoxyribonucleoside 5'-diphosphate + ATP = a 2'-deoxyribonucleoside 5'-triphosphate + ADP. It carries out the reaction a ribonucleoside 5'-diphosphate + ATP = a ribonucleoside 5'-triphosphate + ADP. In terms of biological role, major role in the synthesis of nucleoside triphosphates other than ATP. The ATP gamma phosphate is transferred to the NDP beta phosphate via a ping-pong mechanism, using a phosphorylated active-site intermediate. The chain is Nucleoside diphosphate kinase from Hydrogenovibrio crunogenus (strain DSM 25203 / XCL-2) (Thiomicrospira crunogena).